A 96-amino-acid chain; its full sequence is uncharacterized protein (96 aa).

A signal peptide spans 1–19 (MKFLSALLLIVLLISVVFG). N20 is a glycosylation site (N-linked (GlcNAc...) asparagine). Positions 27–46 (AWATTTTGGTTGSQTSPATH) are enriched in low complexity. A disordered region spans residues 27–58 (AWATTTTGGTTGSQTSPATHGGHGGNGGNGHS). Residues 47–56 (GGHGGNGGNG) are compositionally biased toward gly residues.

It localises to the secreted. This is an uncharacterized protein from Dictyostelium discoideum (Social amoeba).